A 398-amino-acid polypeptide reads, in one-letter code: Arginine biosynthesis bifunctional protein ArgJ (398 aa).

Substrate contacts are provided by T148, K174, T185, E271, N393, and T398. The active-site Nucleophile is the T185.

This sequence belongs to the ArgJ family. Heterotetramer of two alpha and two beta chains.

The protein resides in the cytoplasm. The catalysed reaction is N(2)-acetyl-L-ornithine + L-glutamate = N-acetyl-L-glutamate + L-ornithine. The enzyme catalyses L-glutamate + acetyl-CoA = N-acetyl-L-glutamate + CoA + H(+). Its pathway is amino-acid biosynthesis; L-arginine biosynthesis; L-ornithine and N-acetyl-L-glutamate from L-glutamate and N(2)-acetyl-L-ornithine (cyclic): step 1/1. The protein operates within amino-acid biosynthesis; L-arginine biosynthesis; N(2)-acetyl-L-ornithine from L-glutamate: step 1/4. Its function is as follows. Catalyzes two activities which are involved in the cyclic version of arginine biosynthesis: the synthesis of N-acetylglutamate from glutamate and acetyl-CoA as the acetyl donor, and of ornithine by transacetylation between N(2)-acetylornithine and glutamate. The polypeptide is Arginine biosynthesis bifunctional protein ArgJ (Listeria monocytogenes serovar 1/2a (strain ATCC BAA-679 / EGD-e)).